The primary structure comprises 362 residues: Aminomethyltransferase (362 aa).

Belongs to the GcvT family. The glycine cleavage system is composed of four proteins: P, T, L and H.

The enzyme catalyses N(6)-[(R)-S(8)-aminomethyldihydrolipoyl]-L-lysyl-[protein] + (6S)-5,6,7,8-tetrahydrofolate = N(6)-[(R)-dihydrolipoyl]-L-lysyl-[protein] + (6R)-5,10-methylene-5,6,7,8-tetrahydrofolate + NH4(+). In terms of biological role, the glycine cleavage system catalyzes the degradation of glycine. This chain is Aminomethyltransferase, found in Listeria monocytogenes serotype 4b (strain F2365).